The following is a 216-amino-acid chain: Inorganic pyrophosphatase (216 aa).

Lys-39, Arg-53, and Tyr-65 together coordinate substrate. Residues Asp-93, Asp-98, and Asp-131 each contribute to the Mg(2+) site. Tyr-168 provides a ligand contact to substrate.

The protein belongs to the PPase family. As to quaternary structure, homohexamer. It depends on Mg(2+) as a cofactor.

The protein localises to the cytoplasm. The catalysed reaction is diphosphate + H2O = 2 phosphate + H(+). Its function is as follows. Catalyzes the hydrolysis of inorganic pyrophosphate (PPi) forming two phosphate ions. This is Inorganic pyrophosphatase from Chlamydia caviae (strain ATCC VR-813 / DSM 19441 / 03DC25 / GPIC) (Chlamydophila caviae).